A 309-amino-acid polypeptide reads, in one-letter code: ATP-dependent Clp protease proteolytic subunit 3, chloroplastic (309 aa).

The N-terminal 70 residues, 1 to 70 (MEMSLRLASS…WDVSSFSIDS (70 aa)), are a transit peptide targeting the chloroplast. The residue at position 71 (Val-71) is an N-acetylvaline. The active-site Nucleophile is the Ser-164. His-189 is an active-site residue. Residue Thr-194 is modified to Phosphothreonine. The tract at residues 290 to 309 (DNTNLPSERSMTQNGYAAIE) is disordered. Positions 292–309 (TNLPSERSMTQNGYAAIE) are enriched in polar residues.

Belongs to the peptidase S14 family. In terms of assembly, component of the chloroplastic Clp protease core complex which consist of at least 16 proteins: CLPP4 (3 copies), CLPP5 (3 copies), CLPR4 (2 copies), ClpP1 (1 copy), CLPP6 (1 copy), CLPR2 (1 copy), CLPT1 (1 copy), CLPT2 (1 copy) and 3 copies of CLPP3 and/or CLPR1 and/or CLPR3. The core complex is organized in two heptameric rings, one containing CLPP3,4,5,6 in a 1:2:3:1 ratio and the other CLPP1 and CLPR1,2,3,4 in a 3:1:1:1:1 ratio. Interacts with CHIP. Ubiquitinated in vitro by CHIP. As to expression, mostly expressed in leaves. Also detected in stems, and to a lower extent, in roots (at protein level).

Its subcellular location is the plastid. The protein resides in the chloroplast stroma. It catalyses the reaction Hydrolysis of proteins to small peptides in the presence of ATP and magnesium. alpha-casein is the usual test substrate. In the absence of ATP, only oligopeptides shorter than five residues are hydrolyzed (such as succinyl-Leu-Tyr-|-NHMec, and Leu-Tyr-Leu-|-Tyr-Trp, in which cleavage of the -Tyr-|-Leu- and -Tyr-|-Trp bonds also occurs).. In terms of biological role, cleaves peptides in various proteins in a process that requires ATP hydrolysis. Has a chymotrypsin-like activity. Plays a major role in the degradation of misfolded proteins. In the absence of CLPP3, modified ClpPR core(s) could be formed, albeit at strongly reduced levels. The sequence is that of ATP-dependent Clp protease proteolytic subunit 3, chloroplastic from Arabidopsis thaliana (Mouse-ear cress).